A 201-amino-acid polypeptide reads, in one-letter code: CASP-like protein 2A1 (201 aa).

The interval 1-27 (MEKRDKGSSPMATMMGSRDENEDVENT) is disordered. At 1-30 (MEKRDKGSSPMATMMGSRDENEDVENTTRT) the chain is on the cytoplasmic side. The chain crosses the membrane as a helical span at residues 31–51 (AETMLRLVPMALCVSALVVML). The Extracellular portion of the chain corresponds to 52-72 (KNTQTNDYGSLSYSDLGAFRY). The helical transmembrane segment at 73–93 (LVHVNGICAGYSLLSAVIVAM) threads the bilayer. Topologically, residues 94–101 (PRASTMPR) are cytoplasmic. The helical transmembrane segment at 102–122 (AWAFFLLDQVLTYVILAAGTV) threads the bilayer. The Extracellular segment spans residues 123 to 152 (STEVLYLASKGDTTITWSEACVSFGGFCHK). Residues 153–173 (ALISIVITFVVVICYAALSLL) traverse the membrane as a helical segment. Residues 174-201 (SSYKLFSKYDSPVLTYPGKGIEIATFHG) are Cytoplasmic-facing.

The protein belongs to the Casparian strip membrane proteins (CASP) family. In terms of assembly, homodimer and heterodimers.

Its subcellular location is the cell membrane. This chain is CASP-like protein 2A1, found in Populus trichocarpa (Western balsam poplar).